A 218-amino-acid chain; its full sequence is MFYSHLLFFTFTFACSSSLNRKTKREMDLKDIILDTCHQNAACAHIQMHLKETYVDELCKCGRGEECPIHWDPNDGHSITQAYNQWKFCSPISQDLPVCTREQTAREFSYEMNPVSKKVQMFMFFNCLCPENHFYEFFNEREETGGGQLAIIEERCEKVKQCEKTQICQKIETFQGKFLFKHVKCFCPGNQNCNDDLKKADATNVGDDGSVQHYMKCH.

The signal sequence occupies residues M1 to S16. A propeptide spanning residues S17–R25 is cleaved from the precursor.

Post-translationally, contains 8 disulfide bonds. In terms of tissue distribution, expressed by the venom gland.

Its subcellular location is the secreted. Voltage-gated potassium channel inhibitor. The sequence is that of Kappa-scoloptoxin(11)-Ssd1b from Scolopendra dehaani (Thai centipede).